We begin with the raw amino-acid sequence, 79 residues long: CDC42 small effector protein 1 (79 aa).

2 S-palmitoyl cysteine lipidation sites follow: Cys10 and Cys11. One can recognise a CRIB domain in the interval 30-43; the sequence is IGEPMNFVHLTHIG. A disordered region spans residues 48–79; the sequence is GAGDGLAMTGAVQEQMRSKGNRDRPWSNSRAL. Residues 63–72 show a composition bias toward basic and acidic residues; that stretch reads MRSKGNRDRP.

It belongs to the CDC42SE/SPEC family. Interacts with CDC42 (in GTP-bound form). Interacts weakly with RAC1 and not at all with RHOA.

Its subcellular location is the cytoplasm. The protein resides in the cytoskeleton. It is found in the cell membrane. Functionally, probably involved in the organization of the actin cytoskeleton by acting downstream of CDC42, inducing actin filament assembly. Alters CDC42-induced cell shape changes. In activated T-cells, may play a role in CDC42-mediated F-actin accumulation at the immunological synapse. May play a role in early contractile events in phagocytosis in macrophages. The protein is CDC42 small effector protein 1 (Cdc42se1) of Rattus norvegicus (Rat).